Reading from the N-terminus, the 838-residue chain is Ribonucleoside-diphosphate reductase large subunit (838 aa).

The region spanning 6–97 (KLVTKRDGSV…VTALHKTTTE (92 aa)) is the ATP-cone domain. Residues 10-11 (KR), 16-22 (EPYDEKV), Thr58, and Asp62 each bind ATP. Residue Ser227 participates in GDP binding. A disulfide bond links Cys228 and Cys454. Residues 236–238 (DSI), Lys253, Arg266, and 273–274 (AG) contribute to the dTTP site. Residue Asn437 participates in GDP binding. Residue Asn437 is the Proton acceptor of the active site. The active-site Cysteine radical intermediate is Cys439. GDP-binding positions include Glu441 and 626 to 629 (TAST). Glu441 functions as the Proton acceptor in the catalytic mechanism. The span at 780-794 (KELPKPDKQSKEEVH) shows a compositional bias: basic and acidic residues. Positions 780-838 (KELPKPDKQSKEEVHGSVGRGKRKRVGEKPTANHSNAGAPNLNGPPDTDGDGGCLNCGS) are disordered.

It belongs to the ribonucleoside diphosphate reductase large chain family. Heterodimer of a large and a small subunit.

It carries out the reaction a 2'-deoxyribonucleoside 5'-diphosphate + [thioredoxin]-disulfide + H2O = a ribonucleoside 5'-diphosphate + [thioredoxin]-dithiol. The enzyme catalyses dCDP + [thioredoxin]-disulfide + H2O = CDP + [thioredoxin]-dithiol. Its activity is regulated as follows. Under complex allosteric control mediated by deoxynucleoside triphosphates and ATP binding to separate specificity and activation sites on the large subunit. The type of nucleotide bound at the specificity site determines substrate preference. It seems probable that ATP makes the enzyme reduce CDP and UDP, dGTP favors ADP reduction and dTTP favors GDP reduction. Stimulated by ATP and inhibited by dATP binding to the activity site. In terms of biological role, provides the precursors necessary for DNA synthesis. Catalyzes the rate limiting step in the de novo synthesis of deoxyribonucleotides by directly reducing ribonucleotides to the corresponding deoxyribonucleotides. This chain is Ribonucleoside-diphosphate reductase large subunit (RNR1), found in Trypanosoma brucei brucei.